The chain runs to 490 residues: tRNA-guanine(15) transglycosylase (490 aa).

The Nucleophile role is filled by Asp-92. Substrate contacts are provided by Asp-127 and Ala-195. Residues Cys-278, Cys-280, and Cys-283 each coordinate Zn(2+).

Belongs to the archaeosine tRNA-ribosyltransferase family. Requires Zn(2+) as cofactor.

It carries out the reaction guanosine(15) in tRNA + 7-cyano-7-deazaguanine = 7-cyano-7-carbaguanosine(15) in tRNA + guanine. Its pathway is tRNA modification; archaeosine-tRNA biosynthesis. In terms of biological role, exchanges the guanine residue with 7-cyano-7-deazaguanine (preQ0) at position 15 in the dihydrouridine loop (D-loop) of archaeal tRNAs. This is tRNA-guanine(15) transglycosylase from Haloarcula marismortui (strain ATCC 43049 / DSM 3752 / JCM 8966 / VKM B-1809) (Halobacterium marismortui).